Here is a 267-residue protein sequence, read N- to C-terminus: Small ribosomal subunit protein uS2 (267 aa).

The span at 233 to 250 (RAESDKAETDKVEVEGKG) shows a compositional bias: basic and acidic residues. The disordered stretch occupies residues 233–267 (RAESDKAETDKVEVEGKGEAPAAEAAEVVESADKA). The segment covering 251-261 (EAPAAEAAEVV) has biased composition (low complexity).

Belongs to the universal ribosomal protein uS2 family.

In Syntrophotalea carbinolica (strain DSM 2380 / NBRC 103641 / GraBd1) (Pelobacter carbinolicus), this protein is Small ribosomal subunit protein uS2.